The chain runs to 125 residues: Large ribosomal subunit protein bL12 (125 aa).

This sequence belongs to the bacterial ribosomal protein bL12 family. Homodimer. Part of the ribosomal stalk of the 50S ribosomal subunit. Forms a multimeric L10(L12)X complex, where L10 forms an elongated spine to which 2 to 4 L12 dimers bind in a sequential fashion. Binds GTP-bound translation factors.

Its function is as follows. Forms part of the ribosomal stalk which helps the ribosome interact with GTP-bound translation factors. Is thus essential for accurate translation. In Campylobacter curvus (strain 525.92), this protein is Large ribosomal subunit protein bL12.